A 500-amino-acid chain; its full sequence is Tektin-like protein 1 (500 aa).

Residues 1-25 are disordered; it reads MPVLLPSTDRDQDSRVGAPEWHQAA. Position 14 is a phosphoserine (S14). Residues 198–229 adopt a coiled-coil conformation; sequence MLVWEREELKSMKRKMEKDMERSEALLKALAS. The segment at 265-286 is disordered; sequence VDITRPPTPRTQGLKTPPPDPV. At Y372 the chain carries Phosphotyrosine. A coiled-coil region spans residues 422-448; it reads LTRHNLQMEKNLKELRTTHDNLAWSLN.

As to quaternary structure, microtubule inner protein component of sperm flagellar doublet microtubules.

Its subcellular location is the cytoplasm. The protein localises to the cytoskeleton. The protein resides in the flagellum axoneme. Functionally, microtubule inner protein (MIP) part of the dynein-decorated doublet microtubules (DMTs) in sperm flagellar axoneme, which is required for motile flagellum beating. Forms an extensive interaction network cross-linking the lumen of axonemal doublet microtubules. In Rattus norvegicus (Rat), this protein is Tektin-like protein 1.